A 179-amino-acid chain; its full sequence is Large ribosomal subunit protein uL5 (179 aa).

The protein belongs to the universal ribosomal protein uL5 family. As to quaternary structure, part of the 50S ribosomal subunit; part of the 5S rRNA/L5/L18/L25 subcomplex. Contacts the 5S rRNA and the P site tRNA. Forms a bridge to the 30S subunit in the 70S ribosome.

Its function is as follows. This is one of the proteins that bind and probably mediate the attachment of the 5S RNA into the large ribosomal subunit, where it forms part of the central protuberance. In the 70S ribosome it contacts protein S13 of the 30S subunit (bridge B1b), connecting the 2 subunits; this bridge is implicated in subunit movement. Contacts the P site tRNA; the 5S rRNA and some of its associated proteins might help stabilize positioning of ribosome-bound tRNAs. The chain is Large ribosomal subunit protein uL5 from Haemophilus influenzae (strain 86-028NP).